A 274-amino-acid chain; its full sequence is NH(3)-dependent NAD(+) synthetase (274 aa).

27 to 34 (GLSGGIDS) lines the ATP pocket. D33 serves as a coordination point for Mg(2+). Deamido-NAD(+) is bound at residue R121. ATP is bound at residue T141. A Mg(2+)-binding site is contributed by E146. ATP is bound by residues K170 and S192.

Belongs to the NAD synthetase family. Homodimer.

The enzyme catalyses deamido-NAD(+) + NH4(+) + ATP = AMP + diphosphate + NAD(+) + H(+). It functions in the pathway cofactor biosynthesis; NAD(+) biosynthesis; NAD(+) from deamido-NAD(+) (ammonia route): step 1/1. In terms of biological role, catalyzes the ATP-dependent amidation of deamido-NAD to form NAD. Uses ammonia as a nitrogen source. This chain is NH(3)-dependent NAD(+) synthetase, found in Helicobacter hepaticus (strain ATCC 51449 / 3B1).